Here is a 341-residue protein sequence, read N- to C-terminus: Homeobox protein mls-2 (341 aa).

Disordered regions lie at residues 1 to 78 (MPTS…DSTN) and 139 to 209 (SNPD…TVFS). Residues 64–78 (TTQSSPSASSEDSTN) show a composition bias toward polar residues. The span at 153 to 166 (KDEKSEGKDGETRD) shows a compositional bias: basic and acidic residues. Positions 201–260 (KKKTRTVFSRSQVSQLEMMFECKRYLSSQERSNLAQKLHLTETQVKIWFQNRRNKFKRQA) form a DNA-binding region, homeobox.

The protein belongs to the HMX homeobox family. In terms of tissue distribution, expressed in a subset of head neurons, including AIM and ASK (at protein level).

Its subcellular location is the nucleus. Its function is as follows. Transcription factor that binds to the promoter of target genes. Regulates fate specification and/or differentiation of multiple cell types arising from the embryonic mesodermal (M) lineage and the ABp(l/r)paa precursors. In the postembryonic M lineage, regulates cleavage orientation, cell proliferation and cell fate specification. Regulates hlh-1 expression to specify coelomocyte fate in the mesodermal (M) lineage. In AWC neurons, initiates expression of ceh-36, leading to the expression of terminal differentiation genes. Regulates ventral cephalic sheath (CEPsh) glia differentiation and expression of transcription factor hlh-17 in CEPsh glia. Promotes terminal differentiation and morphogenesis of the epithelial duct and pore cells. In the duct cell, cooperates with the EGF-Ras-ERK pathway in turning on the terminal differentiation gene lin-48. This chain is Homeobox protein mls-2, found in Caenorhabditis elegans.